Here is a 159-residue protein sequence, read N- to C-terminus: Cyclic pyranopterin monophosphate synthase (159 aa).

Residues 75-77 (LCH) and 113-114 (ME) each bind substrate. The active site involves aspartate 128.

It belongs to the MoaC family. As to quaternary structure, homohexamer; trimer of dimers.

The enzyme catalyses (8S)-3',8-cyclo-7,8-dihydroguanosine 5'-triphosphate = cyclic pyranopterin phosphate + diphosphate. Its pathway is cofactor biosynthesis; molybdopterin biosynthesis. In terms of biological role, catalyzes the conversion of (8S)-3',8-cyclo-7,8-dihydroguanosine 5'-triphosphate to cyclic pyranopterin monophosphate (cPMP). The sequence is that of Cyclic pyranopterin monophosphate synthase from Burkholderia multivorans (strain ATCC 17616 / 249).